We begin with the raw amino-acid sequence, 468 residues long: F-box/LRR-repeat protein At4g14096 (468 aa).

Residues 7–60 (RDIISSLPEAISCHILSFLPTKEAASTSVLSKKWRYLFAFVPNLDLDESVYLNP) enclose the F-box domain. 6 LRR repeats span residues 114–136 (VSDLDLHVYMETEFVFPSEMFLS), 138–167 (TLVRLKLMLYPLLEFEDVYLPKLKTLYIDS), 169–194 (YFEKYGIGLTKLLSGCPILEDLVLDD), 216–241 (STQVRDEFPKSVSIDTPNLVYLKFTD), 292–323 (TLYLSSNTLQVLTYSCDAIPIFNNLTHLTIES), and 324–349 (NPEVGWQSLPGLLKNSPNLETLIFQG).

The sequence is that of F-box/LRR-repeat protein At4g14096 from Arabidopsis thaliana (Mouse-ear cress).